The primary structure comprises 664 residues: Macoilin (664 aa).

The next 4 helical transmembrane spans lie at 28-48 (TFLY…DFVL), 75-95 (AFSV…LLFI), 120-140 (VCLP…AIRF), and 154-174 (FAAH…KSYV). A compositionally biased stretch (basic and acidic residues) spans 253 to 265 (REKGKEKDKDAKK). The segment at 253–274 (REKGKEKDKDAKKHNLGINNNN) is disordered. Ser-305 carries the phosphoserine modification. The segment covering 320–348 (KNYKNASGVVNSSPRSHSATNGSIPSSSS) has biased composition (polar residues). The tract at residues 320 to 375 (KNYKNASGVVNSSPRSHSATNGSIPSSSSKNEKKQKCTSKSPSTHKDLMENCIPNN) is disordered. A glycan (N-linked (GlcNAc...) asparagine) is linked at Asn-324. Position 332 is a phosphoserine (Ser-332). 2 N-linked (GlcNAc...) asparagine glycosylation sites follow: Asn-340 and Asn-452. The tract at residues 630–664 (TSPLSPVSPHYSSKFVETSPSGLDPNASVYQPLKK) is disordered. Residues Ser-631 and Ser-634 each carry the phosphoserine modification. N-linked (GlcNAc...) asparagine glycosylation occurs at Asn-655.

The protein belongs to the macoilin family.

It localises to the rough endoplasmic reticulum membrane. The protein localises to the nucleus membrane. Its function is as follows. Plays a role in the regulation of neuronal activity. The chain is Macoilin (MACO1) from Canis lupus familiaris (Dog).